Reading from the N-terminus, the 295-residue chain is 4-hydroxy-tetrahydrodipicolinate synthase (295 aa).

A pyruvate-binding site is contributed by threonine 48. Tyrosine 135 acts as the Proton donor/acceptor in catalysis. The active-site Schiff-base intermediate with substrate is lysine 163. Pyruvate is bound at residue valine 204.

It belongs to the DapA family. As to quaternary structure, homotetramer; dimer of dimers.

The protein localises to the cytoplasm. The catalysed reaction is L-aspartate 4-semialdehyde + pyruvate = (2S,4S)-4-hydroxy-2,3,4,5-tetrahydrodipicolinate + H2O + H(+). The protein operates within amino-acid biosynthesis; L-lysine biosynthesis via DAP pathway; (S)-tetrahydrodipicolinate from L-aspartate: step 3/4. Functionally, catalyzes the condensation of (S)-aspartate-beta-semialdehyde [(S)-ASA] and pyruvate to 4-hydroxy-tetrahydrodipicolinate (HTPA). This chain is 4-hydroxy-tetrahydrodipicolinate synthase, found in Francisella philomiragia subsp. philomiragia (strain ATCC 25017 / CCUG 19701 / FSC 153 / O#319-036).